The primary structure comprises 203 residues: Probable proteasome subunit beta type-1 (203 aa).

A propeptide spans Met-1–Gly-10 (removed in mature form). Thr-11 (nucleophile) is an active-site residue.

Belongs to the peptidase T1B family. The 26S proteasome consists of a 20S proteasome core and two 19S regulatory subunits. The 20S proteasome core is composed of 28 subunits that are arranged in four stacked rings, resulting in a barrel-shaped structure. The two end rings are each formed by seven alpha subunits, and the two central rings are each formed by seven beta subunits. The catalytic chamber with the active sites is on the inside of the barrel.

The protein resides in the cytoplasm. It localises to the nucleus. It catalyses the reaction Cleavage of peptide bonds with very broad specificity.. In terms of biological role, the proteasome degrades poly-ubiquitinated proteins in the cytoplasm and in the nucleus. It is essential for the regulated turnover of proteins and for the removal of misfolded proteins. The proteasome is a multicatalytic proteinase complex that is characterized by its ability to cleave peptides with Arg, Phe, Tyr, Leu, and Glu adjacent to the leaving group at neutral or slightly basic pH. It has an ATP-dependent proteolytic activity. This is Probable proteasome subunit beta type-1 (PRE3) from Encephalitozoon cuniculi (strain GB-M1) (Microsporidian parasite).